A 411-amino-acid chain; its full sequence is Carbamoyl phosphate synthase arginine-specific small chain (411 aa).

Residues Ser-50, Gly-232, and Gly-234 each coordinate L-glutamine. Positions 185 to 376 (NVALIDCGVK…FDNIEKYQLQ (192 aa)) constitute a Glutamine amidotransferase type-1 domain. Cys-264 (nucleophile) is an active-site residue. Positions 265, 268, 306, 308, and 309 each coordinate L-glutamine. Residues His-349 and Glu-351 contribute to the active site.

It belongs to the CarA family. In terms of assembly, heterodimer composed of 2 chains; the small (or glutamine) chain promotes the hydrolysis of glutamine to ammonia, which is used by the large (or ammonia) chain to synthesize carbamoyl phosphate.

Its subcellular location is the cytoplasm. It catalyses the reaction hydrogencarbonate + L-glutamine + 2 ATP + H2O = carbamoyl phosphate + L-glutamate + 2 ADP + phosphate + 2 H(+). The enzyme catalyses L-glutamine + H2O = L-glutamate + NH4(+). It functions in the pathway amino-acid biosynthesis; L-arginine biosynthesis; carbamoyl phosphate from bicarbonate: step 1/1. In terms of biological role, small subunit of the arginine-specific carbamoyl phosphate synthase (CPSase). CPSase catalyzes the formation of carbamoyl phosphate from the ammonia moiety of glutamine, carbonate, and phosphate donated by ATP, constituting the first step of 2 biosynthetic pathways, one leading to arginine and/or urea and the other to pyrimidine nucleotides. The small subunit (glutamine amidotransferase) binds and cleaves glutamine to supply the large subunit with the substrate ammonia. This is Carbamoyl phosphate synthase arginine-specific small chain (CPA1) from Saccharomyces cerevisiae (strain ATCC 204508 / S288c) (Baker's yeast).